Here is a 293-residue protein sequence, read N- to C-terminus: Phosphate import ATP-binding protein PstB (293 aa).

An ABC transporter domain is found at 46–288 (MTCRKVDVHY…PGHQLTEDYI (243 aa)). Position 78–85 (78–85 (GPSGCGKS)) interacts with ATP.

It belongs to the ABC transporter superfamily. Phosphate importer (TC 3.A.1.7) family. In terms of assembly, the complex is composed of two ATP-binding proteins (PstB), two transmembrane proteins (PstC and PstA) and a solute-binding protein (PstS).

The protein localises to the cell inner membrane. It catalyses the reaction phosphate(out) + ATP + H2O = ADP + 2 phosphate(in) + H(+). Its function is as follows. Part of the ABC transporter complex PstSACB involved in phosphate import. Responsible for energy coupling to the transport system. This Desulfotalea psychrophila (strain LSv54 / DSM 12343) protein is Phosphate import ATP-binding protein PstB.